Reading from the N-terminus, the 175-residue chain is MNLDFIKSKIAAVPDFPKPGIMFRDITPLLADPQGLRKTAEAMAQELKNKGIQPTIVAGTESRGFIFGVALAEVLGLGFVPVRKPGKLPRATYSVKYDLEYGSDSLEIHQDAFKVTDEVLVVDDLLATGGTAKATVDLIEKTQAKVAGLIFVMELDGLSGREVLAGYNVSALIKF.

Belongs to the purine/pyrimidine phosphoribosyltransferase family. In terms of assembly, homodimer.

Its subcellular location is the cytoplasm. It carries out the reaction AMP + diphosphate = 5-phospho-alpha-D-ribose 1-diphosphate + adenine. Its pathway is purine metabolism; AMP biosynthesis via salvage pathway; AMP from adenine: step 1/1. Functionally, catalyzes a salvage reaction resulting in the formation of AMP, that is energically less costly than de novo synthesis. The protein is Adenine phosphoribosyltransferase of Francisella tularensis subsp. tularensis (strain WY96-3418).